The chain runs to 396 residues: Mevalonate kinase (396 aa).

ATP contacts are provided by residues lysine 13, asparagine 55, serine 135, and 140-146; that span reads GAGLGSS. Catalysis depends on serine 146, which acts as the Proton donor. The Mg(2+) site is built by serine 146 and glutamate 193. Aspartate 204 acts as the Proton acceptor in catalysis.

Belongs to the GHMP kinase family. Mevalonate kinase subfamily. Homodimer. Mg(2+) is required as a cofactor.

The protein resides in the cytoplasm. Its subcellular location is the peroxisome. It catalyses the reaction (R)-mevalonate + ATP = (R)-5-phosphomevalonate + ADP + H(+). It functions in the pathway isoprenoid biosynthesis; isopentenyl diphosphate biosynthesis via mevalonate pathway; isopentenyl diphosphate from (R)-mevalonate: step 1/3. With respect to regulation, farnesyl pyrophosphate and geranyl pyrophosphate inhibit mevalonate kinase activity by binding competitively at the ATP-binding sites. Catalyzes the phosphorylation of mevalonate to mevalonate 5-phosphate, a key step in isoprenoid and cholesterol biosynthesis. This is Mevalonate kinase from Bos taurus (Bovine).